The chain runs to 172 residues: 3-hydroxydecanoyl-[acyl-carrier-protein] dehydratase (172 aa).

His71 is an active-site residue.

Belongs to the thioester dehydratase family. FabA subfamily. As to quaternary structure, homodimer.

It is found in the cytoplasm. The enzyme catalyses a (3R)-hydroxyacyl-[ACP] = a (2E)-enoyl-[ACP] + H2O. It carries out the reaction (3R)-hydroxydecanoyl-[ACP] = (2E)-decenoyl-[ACP] + H2O. It catalyses the reaction (2E)-decenoyl-[ACP] = (3Z)-decenoyl-[ACP]. The protein operates within lipid metabolism; fatty acid biosynthesis. Functionally, necessary for the introduction of cis unsaturation into fatty acids. Catalyzes the dehydration of (3R)-3-hydroxydecanoyl-ACP to E-(2)-decenoyl-ACP and then its isomerization to Z-(3)-decenoyl-ACP. Can catalyze the dehydratase reaction for beta-hydroxyacyl-ACPs with saturated chain lengths up to 16:0, being most active on intermediate chain length. This Brucella abortus (strain S19) protein is 3-hydroxydecanoyl-[acyl-carrier-protein] dehydratase.